A 413-amino-acid chain; its full sequence is Multifunctional CCA protein (413 aa).

2 residues coordinate ATP: G8 and R11. The CTP site is built by G8 and R11. D21 and D23 together coordinate Mg(2+). R91, R143, and R146 together coordinate ATP. CTP contacts are provided by R91, R143, and R146. The region spanning 232–333 is the HD domain; the sequence is TGVHVMMVVD…VRLFERSDAL (102 aa).

The protein belongs to the tRNA nucleotidyltransferase/poly(A) polymerase family. Bacterial CCA-adding enzyme type 1 subfamily. In terms of assembly, monomer. Can also form homodimers and oligomers. The cofactor is Mg(2+). Requires Ni(2+) as cofactor.

It catalyses the reaction a tRNA precursor + 2 CTP + ATP = a tRNA with a 3' CCA end + 3 diphosphate. The enzyme catalyses a tRNA with a 3' CCA end + 2 CTP + ATP = a tRNA with a 3' CCACCA end + 3 diphosphate. Catalyzes the addition and repair of the essential 3'-terminal CCA sequence in tRNAs without using a nucleic acid template. Adds these three nucleotides in the order of C, C, and A to the tRNA nucleotide-73, using CTP and ATP as substrates and producing inorganic pyrophosphate. tRNA 3'-terminal CCA addition is required both for tRNA processing and repair. Also involved in tRNA surveillance by mediating tandem CCA addition to generate a CCACCA at the 3' terminus of unstable tRNAs. While stable tRNAs receive only 3'-terminal CCA, unstable tRNAs are marked with CCACCA and rapidly degraded. In Burkholderia lata (strain ATCC 17760 / DSM 23089 / LMG 22485 / NCIMB 9086 / R18194 / 383), this protein is Multifunctional CCA protein.